Reading from the N-terminus, the 396-residue chain is Acetylornithine aminotransferase 2 (396 aa).

Pyridoxal 5'-phosphate contacts are provided by residues 102 to 103 (GA) and Phe-134. Arg-137 contributes to the N(2)-acetyl-L-ornithine binding site. 219–222 (DEVQ) contacts pyridoxal 5'-phosphate. N6-(pyridoxal phosphate)lysine is present on Lys-248. Pyridoxal 5'-phosphate is bound at residue Thr-276.

The protein belongs to the class-III pyridoxal-phosphate-dependent aminotransferase family. ArgD subfamily. Homodimer. It depends on pyridoxal 5'-phosphate as a cofactor.

It localises to the cytoplasm. It carries out the reaction N(2)-acetyl-L-ornithine + 2-oxoglutarate = N-acetyl-L-glutamate 5-semialdehyde + L-glutamate. Its pathway is amino-acid biosynthesis; L-arginine biosynthesis; N(2)-acetyl-L-ornithine from L-glutamate: step 4/4. The polypeptide is Acetylornithine aminotransferase 2 (Bordetella parapertussis (strain 12822 / ATCC BAA-587 / NCTC 13253)).